A 122-amino-acid chain; its full sequence is Large ribosomal subunit protein uL18 (122 aa).

The protein belongs to the universal ribosomal protein uL18 family. As to quaternary structure, part of the 50S ribosomal subunit; part of the 5S rRNA/L5/L18/L25 subcomplex. Contacts the 5S and 23S rRNAs.

This is one of the proteins that bind and probably mediate the attachment of the 5S RNA into the large ribosomal subunit, where it forms part of the central protuberance. The protein is Large ribosomal subunit protein uL18 of Desulfitobacterium hafniense (strain Y51).